Reading from the N-terminus, the 714-residue chain is DNA ligase (714 aa).

NAD(+)-binding positions include D48–D52, S97–L98, and E129. The N6-AMP-lysine intermediate role is filled by K131. Residues R152, E189, K307, and K331 each contribute to the NAD(+) site. Positions 436, 439, 454, and 460 each coordinate Zn(2+). In terms of domain architecture, BRCT spans K637 to G714.

This sequence belongs to the NAD-dependent DNA ligase family. LigA subfamily. The cofactor is Mg(2+). Mn(2+) serves as cofactor.

It carries out the reaction NAD(+) + (deoxyribonucleotide)n-3'-hydroxyl + 5'-phospho-(deoxyribonucleotide)m = (deoxyribonucleotide)n+m + AMP + beta-nicotinamide D-nucleotide.. In terms of biological role, DNA ligase that catalyzes the formation of phosphodiester linkages between 5'-phosphoryl and 3'-hydroxyl groups in double-stranded DNA using NAD as a coenzyme and as the energy source for the reaction. It is essential for DNA replication and repair of damaged DNA. The polypeptide is DNA ligase (Rhodopseudomonas palustris (strain BisB5)).